A 330-amino-acid polypeptide reads, in one-letter code: MVRFVPWNVPLYRRLETMAVAIYAMVLPVCLIMAFNLIVIPLFWGIAIPYLVWMFYFDTKHESGGRRVSLVRNSILWRYFRDYFPISLIINSNYDPKKNYIFAYHPHGIISIGAFCNFATNANNIDEKLPGLKVHLLTLESNFKIPFLRDVLMSFGMSSVSKKSCENILNSGAGESICLVVGGAEESLDARPGLNEITLKKRKGFIKLALVNGASLVPVYSFGENDIYDQVPNPRGSLVRKIQTKIKDLTGIAPPLFMGRGIFNYDFGLLPVRHKIVTVVGEPIDIPKIKSPTDQVIEHYHQIYVEALQNLFDKHKNSCADKETGNLKIN.

2 consecutive transmembrane segments (helical) span residues 15–35 (LETMAVAIYAMVLPVCLIMAF) and 37–57 (LIVIPLFWGIAIPYLVWMFYF).

The protein belongs to the diacylglycerol acyltransferase family.

The protein localises to the endoplasmic reticulum membrane. It catalyses the reaction an acyl-CoA + a 1,2-diacyl-sn-glycerol = a triacyl-sn-glycerol + CoA. The catalysed reaction is all-trans-retinol + an acyl-CoA = an all-trans-retinyl ester + CoA. It carries out the reaction 2-(9Z-octadecenoyl)-glycerol + (9Z)-octadecenoyl-CoA = 1,2-di-(9Z-octadecenoyl)-sn-glycerol + CoA. The enzyme catalyses 1,2-di-(9Z-octadecenoyl)-sn-glycerol + (9Z)-octadecenoyl-CoA = 1,2,3-tri-(9Z-octadecenoyl)-glycerol + CoA. It catalyses the reaction all-trans-retinol + hexadecanoyl-CoA = all-trans-retinyl hexadecanoate + CoA. The catalysed reaction is 1-O-(9Z-octadecenyl)-glycerol + (9Z)-octadecenoyl-CoA = 1-O-(9Z-octadecyl)-3-(9Z-octadecenoyl)-glycerol + CoA. It carries out the reaction 1-(9Z-octadecenoyl)-glycerol + (9Z)-octadecenoyl-CoA = 1,2-di-(9Z-octadecenoyl)-glycerol + CoA. The enzyme catalyses 1,2-di-(9Z-octadecenoyl)-sn-glycerol + hexadecanoyl-CoA = 1,2-di-(9Z)-octadecenoyl-3-hexadecanoyl-sn-glycerol + CoA. It catalyses the reaction 1,3-di-(9Z-octadecenoyl)-glycerol + (9Z)-octadecenoyl-CoA = 1,2,3-tri-(9Z-octadecenoyl)-glycerol + CoA. The catalysed reaction is 2,3-di-(9Z)-octadecenoyl-sn-glycerol + (9Z)-octadecenoyl-CoA = 1,2,3-tri-(9Z-octadecenoyl)-glycerol + CoA. It carries out the reaction 2-(9Z-octadecenoyl)-glycerol + hexadecanoyl-CoA = 1-hexadecanoyl-2-(9Z-octadecenoyl)-sn-glycerol + CoA. Its pathway is glycerolipid metabolism; triacylglycerol biosynthesis. Functionally, catalyzes the terminal and only committed step in triacylglycerol synthesis by using diacylglycerol and fatty acyl CoA as substrates. Required for storage lipid synthesis. The sequence is that of Diacylglycerol O-acyltransferase 2 (dgat2) from Dictyostelium discoideum (Social amoeba).